Here is a 106-residue protein sequence, read N- to C-terminus: Protein translocase subunit SecE (106 aa).

Transmembrane regions (helical) follow at residues 20–40 and 75–95; these read LPIR…LAAI and IVIG…SIIV.

Belongs to the SecE/SEC61-gamma family. Component of the Sec protein translocase complex. Heterotrimer consisting of SecY, SecE and SecG subunits. The heterotrimers can form oligomers, although 1 heterotrimer is thought to be able to translocate proteins. Interacts with the ribosome. Interacts with SecDF, and other proteins may be involved. Interacts with SecA.

The protein localises to the cell inner membrane. Essential subunit of the Sec protein translocation channel SecYEG. Clamps together the 2 halves of SecY. May contact the channel plug during translocation. In Haemophilus influenzae (strain ATCC 51907 / DSM 11121 / KW20 / Rd), this protein is Protein translocase subunit SecE.